The following is a 312-amino-acid chain: Porphobilinogen deaminase (312 aa).

Position 243 is an S-(dipyrrolylmethanemethyl)cysteine (cysteine 243).

This sequence belongs to the HMBS family. In terms of assembly, monomer. It depends on dipyrromethane as a cofactor.

It catalyses the reaction 4 porphobilinogen + H2O = hydroxymethylbilane + 4 NH4(+). The protein operates within porphyrin-containing compound metabolism; protoporphyrin-IX biosynthesis; coproporphyrinogen-III from 5-aminolevulinate: step 2/4. Tetrapolymerization of the monopyrrole PBG into the hydroxymethylbilane pre-uroporphyrinogen in several discrete steps. The sequence is that of Porphobilinogen deaminase from Vibrio campbellii (strain ATCC BAA-1116).